The following is a 453-amino-acid chain: Serine--tRNA ligase (453 aa).

Residue 252–254 coordinates L-serine; that stretch reads TAE. Residues 283–285 and V299 each bind ATP; that span reads RKE. An L-serine-binding site is contributed by E306. 370–373 contributes to the ATP binding site; that stretch reads EMVS. T405 contributes to the L-serine binding site.

The protein belongs to the class-II aminoacyl-tRNA synthetase family. Type-1 seryl-tRNA synthetase subfamily. As to quaternary structure, homodimer. The tRNA molecule binds across the dimer.

It localises to the cytoplasm. The catalysed reaction is tRNA(Ser) + L-serine + ATP = L-seryl-tRNA(Ser) + AMP + diphosphate + H(+). It carries out the reaction tRNA(Sec) + L-serine + ATP = L-seryl-tRNA(Sec) + AMP + diphosphate + H(+). The protein operates within aminoacyl-tRNA biosynthesis; selenocysteinyl-tRNA(Sec) biosynthesis; L-seryl-tRNA(Sec) from L-serine and tRNA(Sec): step 1/1. Its function is as follows. Catalyzes the attachment of serine to tRNA(Ser). Is also able to aminoacylate tRNA(Sec) with serine, to form the misacylated tRNA L-seryl-tRNA(Sec), which will be further converted into selenocysteinyl-tRNA(Sec). The sequence is that of Serine--tRNA ligase from Sulfurisphaera tokodaii (strain DSM 16993 / JCM 10545 / NBRC 100140 / 7) (Sulfolobus tokodaii).